The chain runs to 692 residues: MAREFSLEKTRNIGIMAHIDAGKTTTTERILFYTGRIHKIGETHEGASQMDWMEQEQERGITITSAATTAQWKGYRVNIIDTPGHVDFTVEVERSLRVLDGAVAVLDAQSGVEPQTETVWRQATTYGVPRIVFVNKMDKTGADFLYSVGTLRDRLEANAHAIQLPIGAEDNFEGIIDLVENVAYYYEDDLGTRSEAREIPAEYKDKAEELRASLIEAVAELDEELMMKYLEGEEITVDELKAAIRKGTCNVEFYPVLCGSAFKNKGVQLVLDAVLDYLPAPTDVPAIKGTLPDSDEEVTRESSDDAPFSALAFKVMTDPYVGKLTFFRVYSGTLDSGSYVRNSTKGKRERVGRILQMHANSREEISTVYAGDIAAAVGLKDTTTGDTLCDEKNLVILESMEFPEPVIHVAIEPKSKADQDKMSTALAKLAEEDPTFRAHTDPETGQTIIGGMGELHLDIIVDRMKREFKVEANVGAPQVAYRETFRASAQVEGKFVRQSGGRGQFGHVWIEFSPNEEGKGFEFENAIVGGVVPREYIPAVQAGLEDALQNGVVAGYPVIDIKAKLFDGSYHDVDSNEMAFKIAASMALKNAASKCNPVILEPISKVEVVIPEEYMGDIMGDITSRRGRVEGMEGRGNAQVVRAMVPLSEMFGYATALRSNTQGRGTFTMVFDHYEEVPKSIADEIIKKNQGE.

Positions Glu-8 to Thr-282 constitute a tr-type G domain. GTP contacts are provided by residues Ala-17–Thr-24, Asp-81–His-85, and Asn-135–Asp-138.

Belongs to the TRAFAC class translation factor GTPase superfamily. Classic translation factor GTPase family. EF-G/EF-2 subfamily.

Its subcellular location is the cytoplasm. Functionally, catalyzes the GTP-dependent ribosomal translocation step during translation elongation. During this step, the ribosome changes from the pre-translocational (PRE) to the post-translocational (POST) state as the newly formed A-site-bound peptidyl-tRNA and P-site-bound deacylated tRNA move to the P and E sites, respectively. Catalyzes the coordinated movement of the two tRNA molecules, the mRNA and conformational changes in the ribosome. This Bacillus licheniformis (strain ATCC 14580 / DSM 13 / JCM 2505 / CCUG 7422 / NBRC 12200 / NCIMB 9375 / NCTC 10341 / NRRL NRS-1264 / Gibson 46) protein is Elongation factor G.